A 685-amino-acid chain; its full sequence is Mannan-binding lectin serine protease 2 (685 aa).

A signal peptide spans 1–19 (MRLLIFLGLLWSLVATLLG). One can recognise a CUB 1 domain in the interval 20–137 (SKWPEPVFGR…TGFEAFYAAE (118 aa)). Ca(2+) contacts are provided by E67 and D75. A disulfide bond links C72 and C90. N103 carries N-linked (GlcNAc...) asparagine glycosylation. 5 residues coordinate Ca(2+): D120, S122, N123, D138, and E141. The EGF-like; calcium-binding domain occupies 138 to 181 (DVDECRVSLGDSVPCDHYCHNYLGGYYCSCRAGYVLHQNKHTCS). Cystine bridges form between C142/C156, C152/C165, C167/C180, C184/C211, and C241/C259. Residues N158 and G162 each coordinate Ca(2+). N158 is subject to (3R)-3-hydroxyasparagine. A CUB 2 domain is found at 184–296 (CSGQVFTGRS…TGWKIHYTST (113 aa)). N-linked (GlcNAc...) asparagine glycans are attached at residues N285 and N308. Sushi domains follow at residues 298 to 363 (RPCP…ECSI) and 364 to 431 (IDCG…VCEP). Intrachain disulfides connect C300-C348, C328-C361, C366-C411, C396-C429, C433-C552, C598-C617, and C628-C659. The Peptidase S1 domain maps to 444–683 (IVGGQPAKPG…YIPWIENIIS (240 aa)). Residues H483 and D532 each act as charge relay system in the active site. N545 carries an N-linked (GlcNAc...) asparagine glycan. Catalysis depends on S632, which acts as the Charge relay system. N-linked (GlcNAc...) asparagine glycosylation occurs at N641.

This sequence belongs to the peptidase S1 family. In terms of assembly, homodimer; disulfide-linked. Binds MBL2. Isoform 2 binds to MASP1. Binds SERPING1. The iron and 2-oxoglutarate dependent 3-hydroxylation of aspartate and asparagine is (R) stereospecific within EGF domains. Plasma.

The protein resides in the secreted. The enzyme catalyses Selective cleavage after Arg-223 in complement component C2 (-Ser-Leu-Gly-Arg-|-Lys-Ile-Gln-Ile) and after Arg-76 in complement component C4 (-Gly-Leu-Gln-Arg-|-Ala-Leu-Glu-Ile).. Functionally, serum protease that plays an important role in the activation of the complement system via mannose-binding lectin. After activation by auto-catalytic cleavage it cleaves C2 and C4, leading to their activation and to the formation of C3 convertase. The sequence is that of Mannan-binding lectin serine protease 2 (Masp2) from Mus musculus (Mouse).